The sequence spans 244 residues: Short-chain dehydrogenase/reductase family member NovK (244 aa).

NADP(+)-binding positions include 9 to 12, 59 to 60, and 154 to 158; these read GGGE, EL, and RPVLD.

This sequence belongs to the short-chain dehydrogenases/reductases (SDR) family. As to quaternary structure, heterotetramer; the NovJ(2)K(2) heterotetramer is composed of subunits of 2 NovJ and 2 subunits of NovK.

The protein operates within antibiotic biosynthesis; novobiocin biosynthesis. In terms of biological role, non-catalytic subunit of the NovJ(2)K(2) heterotetramer that catalyzes the NADPH-dependent reduction of the tyrosyl moiety of L-beta-OH-Tyr-S-NovH intermediate to yield the tethered beta-ketotyrosyl-S-NovH in the novobiocin biosynthesis pathway. Novobiocin is an aminocoumarin family antibiotic that targets bacterial DNA gyrases. In Streptomyces niveus (Streptomyces spheroides), this protein is Short-chain dehydrogenase/reductase family member NovK (novK).